Here is a 688-residue protein sequence, read N- to C-terminus: Glycine--tRNA ligase beta subunit (688 aa).

This sequence belongs to the class-II aminoacyl-tRNA synthetase family. In terms of assembly, tetramer of two alpha and two beta subunits.

The protein localises to the cytoplasm. It catalyses the reaction tRNA(Gly) + glycine + ATP = glycyl-tRNA(Gly) + AMP + diphosphate. This Vibrio atlanticus (strain LGP32) (Vibrio splendidus (strain Mel32)) protein is Glycine--tRNA ligase beta subunit.